The chain runs to 297 residues: Ribonuclease HIII (297 aa).

Positions 81–297 (IPIIGTDEVG…NTKKAQALLK (217 aa)) constitute an RNase H type-2 domain. A divalent metal cation contacts are provided by Asp87, Glu88, and Asp192.

This sequence belongs to the RNase HII family. RnhC subfamily. Mn(2+) serves as cofactor. Requires Mg(2+) as cofactor.

Its subcellular location is the cytoplasm. It catalyses the reaction Endonucleolytic cleavage to 5'-phosphomonoester.. Endonuclease that specifically degrades the RNA of RNA-DNA hybrids. This Streptococcus agalactiae serotype III (strain NEM316) protein is Ribonuclease HIII.